We begin with the raw amino-acid sequence, 718 residues long: SANT and BTB domain regulator of class switch recombination (718 aa).

The region spanning 21-59 is the SANT domain; sequence DMILYPLIGIPQTINWETVARLVPGLTPKECVKRFDELK. The BTB domain occupies 147-255; the sequence is MVIHVCDEAK…QCIQYCHKNM (109 aa). The span at 555–576 shows a compositional bias: acidic residues; the sequence is SEEEEYTTGSEVTEDEVGDEEE. Disordered regions lie at residues 555 to 622 and 690 to 718; these read SEEE…SPFV and RASV…GRPA. Basic residues predominate over residues 580–595; it reads KQRKKEKPKKFTKPPK. Residues 604–615 are compositionally biased toward basic and acidic residues; it reads QKKEKTLEKSTS.

Belongs to the KIAA1841 family. As to quaternary structure, homodimer. Interacts (via the BTB domain) with HDAC1 and NCOR2.

Negatively regulates class switch recombination or isotype switching in splenic B-cells. The sequence is that of SANT and BTB domain regulator of class switch recombination from Mus musculus (Mouse).